We begin with the raw amino-acid sequence, 144 residues long: Large ribosomal subunit protein uL15 (144 aa).

Residues 1-52 (MRLNTLSPAEGAKHAPKRVGRGIGSGLGKTGGRGHKGQKSRSGGGVRRGFEG) form a disordered region. The segment covering 21–31 (RGIGSGLGKTG) has biased composition (gly residues).

This sequence belongs to the universal ribosomal protein uL15 family. As to quaternary structure, part of the 50S ribosomal subunit.

In terms of biological role, binds to the 23S rRNA. In Buchnera aphidicola subsp. Acyrthosiphon kondoi (Acyrthosiphon kondoi symbiotic bacterium), this protein is Large ribosomal subunit protein uL15.